The primary structure comprises 348 residues: Major outer membrane protein P.IB (348 aa).

Residues Met1–Ala19 form the signal peptide.

Belongs to the Gram-negative porin family. As to quaternary structure, homotrimer.

It localises to the cell outer membrane. In terms of biological role, serves as a slightly cation selective porin. Major antigen on the gonococcal cell surface and it may have pathogenic properties in addition to its porin activity. The polypeptide is Major outer membrane protein P.IB (porB) (Neisseria gonorrhoeae).